Consider the following 149-residue polypeptide: Arginine repressor (149 aa).

The protein belongs to the ArgR family.

It localises to the cytoplasm. It participates in amino-acid biosynthesis; L-arginine biosynthesis [regulation]. In terms of biological role, regulates arginine biosynthesis genes. This chain is Arginine repressor, found in Bacillus velezensis (strain DSM 23117 / BGSC 10A6 / LMG 26770 / FZB42) (Bacillus amyloliquefaciens subsp. plantarum).